The primary structure comprises 333 residues: Receptor polysaccharide phosphotransferase WefC (333 aa).

This sequence belongs to the stealth family.

In terms of biological role, part of the type 2Gn receptor polysaccharide (RPS) biosynthesis locus. Essential for cell surface RPS production, and for synthesis of the host-like GalNAc beta 1-3Gal (Gn) motif of the RPS. Probably encodes a 1-3Gal alpha transferase. The chain is Receptor polysaccharide phosphotransferase WefC (wefC) from Streptococcus gordonii.